The following is a 65-amino-acid chain: Photosystem II reaction center protein J (65 aa).

The chain crosses the membrane as a helical span at residues 35 to 55 (LWLVATAGGTAVIFVLGIFFY).

The protein belongs to the PsbJ family. As to quaternary structure, PSII is composed of 1 copy each of membrane proteins PsbA, PsbB, PsbC, PsbD, PsbE, PsbF, PsbH, PsbI, PsbJ, PsbK, PsbL, PsbM, PsbT, PsbX, PsbY, Psb30/Ycf12, peripheral proteins PsbO, CyanoQ (PsbQ), PsbU, PsbV and a large number of cofactors. It forms dimeric complexes.

It is found in the cellular thylakoid membrane. Its function is as follows. One of the components of the core complex of photosystem II (PSII). PSII is a light-driven water:plastoquinone oxidoreductase that uses light energy to abstract electrons from H(2)O, generating O(2) and a proton gradient subsequently used for ATP formation. It consists of a core antenna complex that captures photons, and an electron transfer chain that converts photonic excitation into a charge separation. This Prochlorococcus marinus (strain NATL1A) protein is Photosystem II reaction center protein J.